We begin with the raw amino-acid sequence, 153 residues long: Large ribosomal subunit protein uL23m (153 aa).

The tract at residues 110–153 (IFPEKDKKSKEGSVEEMHEKFMEDERQRQKPDPRRGGVTEWFGL) is disordered. Residues 111–146 (FPEKDKKSKEGSVEEMHEKFMEDERQRQKPDPRRGG) show a composition bias toward basic and acidic residues.

This sequence belongs to the universal ribosomal protein uL23 family. As to quaternary structure, component of the mitochondrial ribosome large subunit (39S) which comprises a 16S rRNA and about 50 distinct proteins.

It is found in the mitochondrion. This chain is Large ribosomal subunit protein uL23m (mrpl23), found in Danio rerio (Zebrafish).